The following is a 288-amino-acid chain: 33 kDa chaperonin (288 aa).

2 cysteine pairs are disulfide-bonded: C225/C227 and C258/C261.

It belongs to the HSP33 family. In terms of processing, under oxidizing conditions two disulfide bonds are formed involving the reactive cysteines. Under reducing conditions zinc is bound to the reactive cysteines and the protein is inactive.

The protein resides in the cytoplasm. In terms of biological role, redox regulated molecular chaperone. Protects both thermally unfolding and oxidatively damaged proteins from irreversible aggregation. Plays an important role in the bacterial defense system toward oxidative stress. The protein is 33 kDa chaperonin of Shewanella denitrificans (strain OS217 / ATCC BAA-1090 / DSM 15013).